Reading from the N-terminus, the 497-residue chain is Nucleoside transporter 1 (497 aa).

Over 1–26 (MSLKGGTAAPAPMAPPRKWYDMTSAE) the chain is Cytoplasmic. The chain crosses the membrane as a helical span at residues 27–47 (FYVYVVAFMCGISIMMPINAV). At 48 to 77 (FSAPSYMLEYYLYATKDPFLVPKMTNFWTN) the chain is on the extracellular side. Residues 78–98 (VMTYYNLISMVTSLVVEPLTL) traverse the membrane as a helical segment. Residues 99-107 (LKSFRKIPM) lie on the Cytoplasmic side of the membrane. The helical transmembrane segment at 108-128 (LVRLLGGLSVLIIEIIVLMVV) threads the bilayer. Residues 129–135 (PARGTTE) lie on the Extracellular side of the membrane. A helical transmembrane segment spans residues 136 to 156 (AGAVATMCIAGFIGGLGTSIF). Residues 157 to 172 (ESTVYGMFGAFPPSFT) lie on the Cytoplasmic side of the membrane. A helical membrane pass occupies residues 173–193 (SIMMGGVGISGVLTSLIQIIV). Over 194–208 (KAALPDTYEGVKKQS) the chain is Extracellular. A helical transmembrane segment spans residues 209-229 (YIYYSLDVGIQAATFIALIMM). At 230–337 (RFNSFAQLHF…SVFSVLRSVK (108 aa)) the chain is on the cytoplasmic side. Over residues 286-299 (NAEAHKDDPLAERE) the composition is skewed to basic and acidic residues. A disordered region spans residues 286-316 (NAEAHKDDPLAERELSEEESGDSRAVEAAGE). The chain crosses the membrane as a helical span at residues 338–358 (WMFVACGFNFLITLFLFPGIA). Over 359–361 (TGM) the chain is Extracellular. The helical transmembrane segment at 362–382 (FPESKWFATVAVFIFNCCDVL) threads the bilayer. The Cytoplasmic portion of the chain corresponds to 383–400 (GRFSSAFRITWPRRYNQR). Residues 401-421 (WIIVAASFARVIFVPLLLLHS) form a helical membrane-spanning segment. The Extracellular portion of the chain corresponds to 422–432 (YHYIPSEAYGY). The chain crosses the membrane as a helical span at residues 433–453 (VMQVVFGLSSGYIASMALVLG). Topologically, residues 454–465 (PQSKGIDNDGKR) are cytoplasmic. The chain crosses the membrane as a helical span at residues 466 to 486 (FVAGTLMGISILVGGTIGTVL). At 487–497 (SIMTQTIRETY) the chain is on the extracellular side.

It belongs to the SLC29A/ENT transporter (TC 2.A.57) family.

The protein localises to the cell membrane. It carries out the reaction adenosine(in) = adenosine(out). It catalyses the reaction hypoxanthine(out) = hypoxanthine(in). The catalysed reaction is inosine(in) = inosine(out). The enzyme catalyses uridine(out) = uridine(in). It carries out the reaction cytidine(in) = cytidine(out). In terms of biological role, nucleoside transporter with broad substrate specificity. Transports adenosine with high affinity. Can also transport hypoxanthine, inosine, uridine and cytidine. The polypeptide is Nucleoside transporter 1 (Crithidia fasciculata).